Here is a 264-residue protein sequence, read N- to C-terminus: Triosephosphate isomerase (264 aa).

Residue 13–15 (NWK) participates in substrate binding. His106 serves as the catalytic Electrophile. Glu179 serves as the catalytic Proton acceptor. Residues Gly185, Ser223, and 244 to 245 (GG) each bind substrate.

Belongs to the triosephosphate isomerase family. Homodimer.

It is found in the cytoplasm. The enzyme catalyses D-glyceraldehyde 3-phosphate = dihydroxyacetone phosphate. Its pathway is carbohydrate biosynthesis; gluconeogenesis. It functions in the pathway carbohydrate degradation; glycolysis; D-glyceraldehyde 3-phosphate from glycerone phosphate: step 1/1. Involved in the gluconeogenesis. Catalyzes stereospecifically the conversion of dihydroxyacetone phosphate (DHAP) to D-glyceraldehyde-3-phosphate (G3P). This is Triosephosphate isomerase from Acinetobacter baumannii (strain SDF).